The primary structure comprises 219 residues: Protein-L-isoaspartate O-methyltransferase (219 aa).

Ser-60 is a catalytic residue.

Belongs to the methyltransferase superfamily. L-isoaspartyl/D-aspartyl protein methyltransferase family.

It is found in the cytoplasm. The catalysed reaction is [protein]-L-isoaspartate + S-adenosyl-L-methionine = [protein]-L-isoaspartate alpha-methyl ester + S-adenosyl-L-homocysteine. Its function is as follows. Catalyzes the methyl esterification of L-isoaspartyl residues in peptides and proteins that result from spontaneous decomposition of normal L-aspartyl and L-asparaginyl residues. It plays a role in the repair and/or degradation of damaged proteins. This is Protein-L-isoaspartate O-methyltransferase from Rhodospirillum rubrum (strain ATCC 11170 / ATH 1.1.1 / DSM 467 / LMG 4362 / NCIMB 8255 / S1).